We begin with the raw amino-acid sequence, 409 residues long: Putative competence-damage inducible protein (409 aa).

Belongs to the CinA family.

This Clostridium tetani (strain Massachusetts / E88) protein is Putative competence-damage inducible protein.